A 766-amino-acid polypeptide reads, in one-letter code: Cytoplasmic polyadenylation element-binding protein 3 (766 aa).

Disordered regions lie at residues 1 to 35 (MSQE…TSET), 131 to 179 (VPSR…ARRL), and 216 to 299 (PVPI…LPPR). 2 stretches are compositionally biased toward polar residues: residues 233 to 256 (ETPT…SDYQ) and 276 to 289 (STPN…NRDN). Positions 310 to 332 (IFVGGVPWDITEAALKDSFGEFG) constitute an RRM domain. The tract at residues 578–602 (KAFSGPNRRSHLSSNSPSKPASLMS) is disordered. Residues 589–602 (LSSNSPSKPASLMS) show a composition bias toward low complexity.

In terms of biological role, cytoplasmic polyadenylation element binding protein that binds to and regulates the translation of specific mRNAs. This is Cytoplasmic polyadenylation element-binding protein 3 (cpb-3) from Caenorhabditis remanei (Caenorhabditis vulgaris).